The primary structure comprises 139 residues: HTH-type transcriptional repressor Mb2911 (139 aa).

Residues 6-138 enclose the HTH marR-type domain; it reads DAPLGYLLYR…FKRMLEKLGS (133 aa).

In terms of assembly, homodimer.

Represses expression of the HQNO methyltransferase htm gene by binding to its promoter region. This is HTH-type transcriptional repressor Mb2911 from Mycobacterium bovis (strain ATCC BAA-935 / AF2122/97).